Reading from the N-terminus, the 835-residue chain is Protein translocase subunit SecA (835 aa).

Residues Gln85, 103 to 107, and Asp492 contribute to the ATP site; that span reads GEGKT. Zn(2+)-binding residues include Cys819, Cys821, Cys830, and Cys831.

It belongs to the SecA family. As to quaternary structure, monomer and homodimer. Part of the essential Sec protein translocation apparatus which comprises SecA, SecYEG and auxiliary proteins SecDF. Other proteins may also be involved. It depends on Zn(2+) as a cofactor.

It localises to the cell membrane. The protein resides in the cytoplasm. It catalyses the reaction ATP + H2O + cellular proteinSide 1 = ADP + phosphate + cellular proteinSide 2.. In terms of biological role, part of the Sec protein translocase complex. Interacts with the SecYEG preprotein conducting channel. Has a central role in coupling the hydrolysis of ATP to the transfer of proteins into and across the cell membrane, serving as an ATP-driven molecular motor driving the stepwise translocation of polypeptide chains across the membrane. The protein is Protein translocase subunit SecA of Clostridium botulinum (strain Okra / Type B1).